We begin with the raw amino-acid sequence, 175 residues long: UPF0398 protein SPP_0409 (175 aa).

Belongs to the UPF0398 family.

This chain is UPF0398 protein SPP_0409, found in Streptococcus pneumoniae (strain P1031).